Consider the following 230-residue polypeptide: Orotidine 5'-phosphate decarboxylase (230 aa).

Residues Asp10, Lys31, 58–67, Thr117, Arg179, Gln188, Gly208, and Arg209 contribute to the substrate site; that span reads DLKLHDIPNT. Lys60 functions as the Proton donor in the catalytic mechanism.

This sequence belongs to the OMP decarboxylase family. Type 1 subfamily. As to quaternary structure, homodimer.

The catalysed reaction is orotidine 5'-phosphate + H(+) = UMP + CO2. It participates in pyrimidine metabolism; UMP biosynthesis via de novo pathway; UMP from orotate: step 2/2. Its function is as follows. Catalyzes the decarboxylation of orotidine 5'-monophosphate (OMP) to uridine 5'-monophosphate (UMP). The sequence is that of Orotidine 5'-phosphate decarboxylase from Staphylococcus epidermidis (strain ATCC 35984 / DSM 28319 / BCRC 17069 / CCUG 31568 / BM 3577 / RP62A).